Reading from the N-terminus, the 283-residue chain is Methylamine utilization ferredoxin-type protein MauN (283 aa).

4Fe-4S ferredoxin-type domains are found at residues 217–248 (VRVSARNRDACDNCGACFSTCPEPHVIVPALK) and 251–280 (GSPLILSGDCINCGGCIDSCPNRVFAMASR). Positions 227, 230, 233, 237, 260, 263, 266, and 270 each coordinate [4Fe-4S] cluster.

It participates in one-carbon metabolism; methylamine degradation. Functionally, involved in electron transfer. This is Methylamine utilization ferredoxin-type protein MauN (mauN) from Paracoccus denitrificans (strain Pd 1222).